A 220-amino-acid polypeptide reads, in one-letter code: Guanylate kinase (220 aa).

Residues glycine 3 to threonine 180 form the Guanylate kinase-like domain. Position 10–17 (glycine 10–glycine 17) interacts with ATP.

Belongs to the guanylate kinase family.

The protein resides in the cytoplasm. The enzyme catalyses GMP + ATP = GDP + ADP. Its function is as follows. Essential for recycling GMP and indirectly, cGMP. This Thermus thermophilus (strain ATCC BAA-163 / DSM 7039 / HB27) protein is Guanylate kinase.